The sequence spans 264 residues: 3-methyl-2-oxobutanoate hydroxymethyltransferase (264 aa).

Mg(2+)-binding residues include aspartate 45 and aspartate 84. Residues 45 to 46 (DS), aspartate 84, and lysine 112 each bind 3-methyl-2-oxobutanoate. Mg(2+) is bound at residue glutamate 114. Glutamate 181 (proton acceptor) is an active-site residue.

The protein belongs to the PanB family. In terms of assembly, homodecamer; pentamer of dimers. Requires Mg(2+) as cofactor.

It localises to the cytoplasm. It catalyses the reaction 3-methyl-2-oxobutanoate + (6R)-5,10-methylene-5,6,7,8-tetrahydrofolate + H2O = 2-dehydropantoate + (6S)-5,6,7,8-tetrahydrofolate. It functions in the pathway cofactor biosynthesis; (R)-pantothenate biosynthesis; (R)-pantoate from 3-methyl-2-oxobutanoate: step 1/2. In terms of biological role, catalyzes the reversible reaction in which hydroxymethyl group from 5,10-methylenetetrahydrofolate is transferred onto alpha-ketoisovalerate to form ketopantoate. This is 3-methyl-2-oxobutanoate hydroxymethyltransferase from Psychromonas ingrahamii (strain DSM 17664 / CCUG 51855 / 37).